A 332-amino-acid polypeptide reads, in one-letter code: Phosphate acyltransferase (332 aa).

Belongs to the PlsX family. Homodimer. Probably interacts with PlsY.

The protein localises to the cytoplasm. The enzyme catalyses a fatty acyl-[ACP] + phosphate = an acyl phosphate + holo-[ACP]. It functions in the pathway lipid metabolism; phospholipid metabolism. Functionally, catalyzes the reversible formation of acyl-phosphate (acyl-PO(4)) from acyl-[acyl-carrier-protein] (acyl-ACP). This enzyme utilizes acyl-ACP as fatty acyl donor, but not acyl-CoA. The polypeptide is Phosphate acyltransferase (Nitratiruptor sp. (strain SB155-2)).